The chain runs to 88 residues: Small ribosomal subunit protein bS20 (88 aa).

A disordered region spans residues 1–20; sequence MANTKSARKSLIKSKQQRKC.

It belongs to the bacterial ribosomal protein bS20 family.

Binds directly to 16S ribosomal RNA. The chain is Small ribosomal subunit protein bS20 from Blochmanniella pennsylvanica (strain BPEN).